Here is an 839-residue protein sequence, read N- to C-terminus: Amyloid-beta A4 precursor protein-binding family A member 1 (839 aa).

Disordered regions lie at residues 1 to 118 (MNHL…DESA), 235 to 346 (RLHH…EKRD), and 362 to 437 (VKTR…ESRK). Acidic residues predominate over residues 23-38 (ESVEADLEHPEVEEEQ). At S79 the chain carries Phosphoserine. 2 stretches are compositionally biased toward basic and acidic residues: residues 103–112 (DGYEAERAQD) and 237–255 (HHYDERSDGESDSPEKEAE). Residues 227–315 (YRQEALGARL…TPGGGHPDSP (89 aa)) are munc-18-1 binding. Residues S243, S247, S249, S264, S281, and S286 each carry the phosphoserine modification. T306 is modified (phosphothreonine). Phosphoserine occurs at positions 314 and 369. At T372 the chain carries Phosphothreonine. The LIN-2/CASK binding stretch occupies residues 375-438 (EPKEPIWVMR…ASTNKESRKS (64 aa)). Positions 389–400 (PTRDCDDQRPVD) are enriched in basic and acidic residues. Residues 401 to 417 (GDSPSPGSSSPLGAESS) show a composition bias toward low complexity. A phosphoserine mark is found at S403, S405, S410, and S570. The 187-residue stretch at 459–645 (DGIIFAANYL…LLNTQDMYND (187 aa)) folds into the PID domain. The segment at 628-643 (LSQKEYSDLLNTQDMY) is autoinhibitory helix linker. 2 PDZ domains span residues 658–744 (DVFI…IVRC) and 749–824 (TVLI…TMPA).

Part of a multimeric complex containing STXBP1 and STX1A. Interacts with STXBP1. Component of the brain-specific heterotrimeric complex (LIN-10-LIN-2-LIN-7 complex) composed of at least APBA1, CASK, and LIN7, which associates with the motor protein KIF17 to transport vesicles along microtubules. Within the complex, interacts (via PDZ domain) with the motor protein KIF17; the interaction is direct and is required for association of KIF17 with the cargo that is to be transported. Binds to the cytoplasmic domain of amyloid protein (APP). Interacts (via PDZ 1 and 2 domains) with FSPB. Isoform 2 interacts (via its truncated PID domain) with active, GTP-bound RAB6A and RAB6B. Brain. Detected in the cerebellum, hippocampus, olfactory system, piriform and entorhinal cortex, supraoptic nucleus of the hypothalamus, substantia nigra, and other mesencephalic areas.

Its subcellular location is the cytoplasm. It localises to the perinuclear region. The protein localises to the nucleus. The protein resides in the golgi apparatus. In terms of biological role, putative function in synaptic vesicle exocytosis by binding to Munc18-1, an essential component of the synaptic vesicle exocytotic machinery. May modulate processing of the amyloid-beta precursor protein (APP) and hence formation of APP-beta. This is Amyloid-beta A4 precursor protein-binding family A member 1 (Apba1) from Rattus norvegicus (Rat).